A 270-amino-acid polypeptide reads, in one-letter code: ParA family protein MPN_688 (270 aa).

Belongs to the ParA family.

The polypeptide is ParA family protein MPN_688 (Mycoplasma pneumoniae (strain ATCC 29342 / M129 / Subtype 1) (Mycoplasmoides pneumoniae)).